We begin with the raw amino-acid sequence, 232 residues long: Purine nucleoside phosphorylase DeoD-type (232 aa).

A purine D-ribonucleoside is bound at residue His-4. Residues Gly-20, Arg-24, Arg-43, and 87-90 (RVGS) contribute to the phosphate site. A purine D-ribonucleoside-binding positions include Glu-162, 178–180 (EME), and 202–203 (SD). Residue Asp-203 is the Proton donor of the active site.

It belongs to the PNP/UDP phosphorylase family. As to quaternary structure, homohexamer; trimer of homodimers.

The catalysed reaction is a purine D-ribonucleoside + phosphate = a purine nucleobase + alpha-D-ribose 1-phosphate. It catalyses the reaction a purine 2'-deoxy-D-ribonucleoside + phosphate = a purine nucleobase + 2-deoxy-alpha-D-ribose 1-phosphate. Catalyzes the reversible phosphorolytic breakdown of the N-glycosidic bond in the beta-(deoxy)ribonucleoside molecules, with the formation of the corresponding free purine bases and pentose-1-phosphate. The polypeptide is Purine nucleoside phosphorylase DeoD-type (Bacillus velezensis (strain DSM 23117 / BGSC 10A6 / LMG 26770 / FZB42) (Bacillus amyloliquefaciens subsp. plantarum)).